The following is a 386-amino-acid chain: Succinate--CoA ligase [ADP-forming] subunit beta (386 aa).

Residues 9–244 (KAVLRSYGVS…LDEEDAKEIE (236 aa)) form the ATP-grasp domain. ATP-binding positions include lysine 46, 53 to 55 (GRG), glutamate 99, cysteine 102, and glutamate 107. The Mg(2+) site is built by asparagine 199 and aspartate 213. Residues asparagine 264 and 321 to 323 (GIM) contribute to the substrate site.

The protein belongs to the succinate/malate CoA ligase beta subunit family. Heterotetramer of two alpha and two beta subunits. Mg(2+) serves as cofactor.

It carries out the reaction succinate + ATP + CoA = succinyl-CoA + ADP + phosphate. The catalysed reaction is GTP + succinate + CoA = succinyl-CoA + GDP + phosphate. The protein operates within carbohydrate metabolism; tricarboxylic acid cycle; succinate from succinyl-CoA (ligase route): step 1/1. Its function is as follows. Succinyl-CoA synthetase functions in the citric acid cycle (TCA), coupling the hydrolysis of succinyl-CoA to the synthesis of either ATP or GTP and thus represents the only step of substrate-level phosphorylation in the TCA. The beta subunit provides nucleotide specificity of the enzyme and binds the substrate succinate, while the binding sites for coenzyme A and phosphate are found in the alpha subunit. This chain is Succinate--CoA ligase [ADP-forming] subunit beta, found in Bacillus thuringiensis (strain Al Hakam).